Here is a 311-residue protein sequence, read N- to C-terminus: Malate dehydrogenase (311 aa).

Residues 7-13 (GAAGGIG) and Asp34 each bind NAD(+). The substrate site is built by Arg81 and Arg87. NAD(+) is bound by residues Asn94 and 117-119 (ITN). Substrate-binding residues include Asn119 and Arg153. His177 (proton acceptor) is an active-site residue. An NAD(+)-binding site is contributed by Met227.

The protein belongs to the LDH/MDH superfamily. MDH type 1 family. In terms of assembly, homodimer.

The enzyme catalyses (S)-malate + NAD(+) = oxaloacetate + NADH + H(+). Catalyzes the reversible oxidation of malate to oxaloacetate. This Shewanella frigidimarina (strain NCIMB 400) protein is Malate dehydrogenase.